The following is a 545-amino-acid chain: MTTNYIFVTGGVVSSLGKGIAAASLAAILEARGLNVTIMKLDPYINVDPGTMSPIQHGEVFVTEDGAETDLDLGHYERFIRTKMSRRNNFTTGRIYSDVLRKERRGDYLGATVQVIPHITNAIKERVLEGGEGHDVVLVEIGGTVGDIESLPFLEAIRQLAVDIGREHALFMHLTLVPYLAAAGEVKTKPTQHSVKELLSIGIQPDILICRSDRAVPANERAKIALFCNVPEKAVISMKDVDSIYKIPGLLKSQGLDDYICKRFSLNCPEANLSEWEQVIYEEANPAGEVTIGMVGKYIELPDAYKSVIEALKHGGLKNRVTVNIKLIDSQDVETRGVEILKDLDAILIPGGFGYRGVEGKIATARYARENNIPYLGICLGMQVALIEFARNVAGMDNANSTEFVPDCKYPVVALITEWRDEDGNVEVRNEKSDLGGTMRLGAQQCQLSDDSLVRQLYGASTIVERHRHRYEVNNMLLKQIEAAGLRVAGRSGDAQLVEIIEVPNHPWFVACQFHPEFTSTPRDGHPLFAGFVKAANEHQKRQAK.

Positions 1-266 are amidoligase domain; that stretch reads MTTNYIFVTG…DDYICKRFSL (266 aa). Position 14 (S14) interacts with CTP. S14 is a UTP binding site. ATP is bound by residues 15-20 and D72; that span reads SLGKGI. The Mg(2+) site is built by D72 and E140. Residues 147–149, 187–192, and K223 each bind CTP; these read DIE and KTKPTQ. Residues 187–192 and K223 contribute to the UTP site; that span reads KTKPTQ. Residue 239 to 241 coordinates ATP; that stretch reads KDV. Positions 291 to 542 constitute a Glutamine amidotransferase type-1 domain; it reads TIGMVGKYIE…VKAANEHQKR (252 aa). G352 contributes to the L-glutamine binding site. Catalysis depends on C379, which acts as the Nucleophile; for glutamine hydrolysis. L-glutamine contacts are provided by residues 380–383, E403, and R470; that span reads LGMQ. Active-site residues include H515 and E517.

Belongs to the CTP synthase family. As to quaternary structure, homotetramer.

It catalyses the reaction UTP + L-glutamine + ATP + H2O = CTP + L-glutamate + ADP + phosphate + 2 H(+). It carries out the reaction L-glutamine + H2O = L-glutamate + NH4(+). The catalysed reaction is UTP + NH4(+) + ATP = CTP + ADP + phosphate + 2 H(+). Its pathway is pyrimidine metabolism; CTP biosynthesis via de novo pathway; CTP from UDP: step 2/2. Its activity is regulated as follows. Allosterically activated by GTP, when glutamine is the substrate; GTP has no effect on the reaction when ammonia is the substrate. The allosteric effector GTP functions by stabilizing the protein conformation that binds the tetrahedral intermediate(s) formed during glutamine hydrolysis. Inhibited by the product CTP, via allosteric rather than competitive inhibition. Functionally, catalyzes the ATP-dependent amination of UTP to CTP with either L-glutamine or ammonia as the source of nitrogen. Regulates intracellular CTP levels through interactions with the four ribonucleotide triphosphates. The polypeptide is CTP synthase (Salmonella newport (strain SL254)).